The primary structure comprises 914 residues: Exoglucanase-2 (914 aa).

Positions 1–33 (MKRRLMKGISLLTLVFLIGIMLQLSLKSELTAY) are cleaved as a signal peptide. The CBM3 domain occupies 763–914 (VEGVLIIQSF…SGNLVYGIEP (152 aa)).

The protein belongs to the glycosyl hydrolase 48 (cellulase L) family.

The catalysed reaction is Hydrolysis of (1-&gt;4)-beta-D-glucosidic linkages in cellulose and cellotetraose, releasing cellobiose from the non-reducing ends of the chains.. The polypeptide is Exoglucanase-2 (celY) (Thermoclostridium stercorarium (strain ATCC 35414 / DSM 8532 / NCIMB 11754) (Clostridium stercorarium)).